The primary structure comprises 179 residues: FADH(2)-dependent resorcinol hydroxylase, reductase component (179 aa).

Belongs to the non-flavoprotein flavin reductase family. As to quaternary structure, the FADH(2)-dependent resorcinol hydroxylase is composed of two subunits, GraA (the oxygenase component) and GraD (the reductase component). Both subunits are required for activity.

The enzyme catalyses FADH2 + NAD(+) = FAD + NADH + 2 H(+). It participates in aromatic compound metabolism. Functionally, involved in the gamma-resorcylate (2,6-dihydroxybenzoate) catabolism. Reductase component of the resorcinol hydroxylase, which catalyzes the FADPH-dependent conversion of resorcinol to hydroxyquinol. Catalyzes the reduction of FAD by NADH. The reduced flavin is then transferred to the oxygenase component GraA. The polypeptide is FADH(2)-dependent resorcinol hydroxylase, reductase component (Rhizobium sp. (strain MTP-10005)).